A 169-amino-acid polypeptide reads, in one-letter code: Mu-like prophage FluMu host-nuclease inhibitor protein gam (169 aa).

To phage Mu protein gam.

Functionally, protects linear double-stranded DNA of Mu genome from exonuclease degradation. This is Mu-like prophage FluMu host-nuclease inhibitor protein gam from Haemophilus influenzae (strain ATCC 51907 / DSM 11121 / KW20 / Rd).